Here is a 927-residue protein sequence, read N- to C-terminus: Disks large homolog 1 (927 aa).

An L27 domain is found at 4-64; that stretch reads RKQDTQRALT…FYEVTLLDNP (61 aa). 3 consecutive PDZ domains span residues 223-310, 318-405, and 466-547; these read EITL…RRRK, DIKL…AKPT, and KVVL…QYRP. An SH3 domain is found at 581 to 651; sequence KRSLYVRALF…PSKRRVEKKE (71 aa). The interval 692–719 is disordered; that stretch reads DQSEMETSDVDQHVTSNASDSESSYRGQ. Residues 704 to 717 show a composition bias toward polar residues; the sequence is HVTSNASDSESSYR. The 176-residue stretch at 737–912 folds into the Guanylate kinase-like domain; it reads SRPVIILGPT…IYNQIKQIIE (176 aa).

This sequence belongs to the MAGUK family.

It is found in the cell membrane. It localises to the endoplasmic reticulum membrane. The protein localises to the cell junction. The protein resides in the cytoplasm. Its subcellular location is the apical cell membrane. Its function is as follows. Essential multidomain scaffolding protein required for normal development. Recruits channels, receptors and signaling molecules to discrete plasma membrane domains in polarized cells. Promotes epithelial cell layer barrier function via maintaining cell-cell adhesion. May play a role in adherens junction assembly, signal transduction and cell proliferation. The chain is Disks large homolog 1 (dlg1) from Xenopus tropicalis (Western clawed frog).